Consider the following 327-residue polypeptide: Peroxidase 21 (327 aa).

An N-terminal signal peptide occupies residues 1–28; that stretch reads MANAKPFCLLGFFCLLLQLFSIFHIGNG. Disulfide bonds link Cys39-Cys118, Cys72-Cys77, Cys124-Cys323, and Cys204-Cys231. His70 acts as the Proton acceptor in catalysis. Ca(2+) is bound by residues Asp71, Val74, Asp78, and Ser80. Pro167 serves as a coordination point for substrate. N-linked (GlcNAc...) asparagine glycosylation occurs at Asn170. His197 is a heme b binding site. A Ca(2+)-binding site is contributed by Ser198. Residues Asp247, Thr250, and Asp255 each coordinate Ca(2+).

Belongs to the peroxidase family. Classical plant (class III) peroxidase subfamily. Heme b serves as cofactor. Ca(2+) is required as a cofactor. Preferentially expressed in roots and leaves, slightly in stems.

The enzyme catalyses 2 a phenolic donor + H2O2 = 2 a phenolic radical donor + 2 H2O. Functionally, removal of H(2)O(2), oxidation of toxic reductants, biosynthesis and degradation of lignin, suberization, auxin catabolism, response to environmental stresses such as wounding, pathogen attack and oxidative stress. These functions might be dependent on each isozyme/isoform in each plant tissue. Might function as heat shock-like defense protein. May be implicated in the systemic acquired resistance response. This is Peroxidase 21 (PER21) from Arabidopsis thaliana (Mouse-ear cress).